Consider the following 209-residue polypeptide: Large ribosomal subunit protein uL3 (209 aa).

The tract at residues 118–150 (GFQGAIKRHGQSRGPMTHGSRYHRRPGSMGPVD) is disordered.

The protein belongs to the universal ribosomal protein uL3 family. As to quaternary structure, part of the 50S ribosomal subunit. Forms a cluster with proteins L14 and L19.

One of the primary rRNA binding proteins, it binds directly near the 3'-end of the 23S rRNA, where it nucleates assembly of the 50S subunit. In Bacillus pumilus (strain SAFR-032), this protein is Large ribosomal subunit protein uL3.